The primary structure comprises 670 residues: Leucine-rich repeat-containing protein 45 (670 aa).

LRR repeat units lie at residues 87–108 (TVKS…ALGK), 115–136 (SIRS…FSFF), 145–166 (FLQR…ELAM), 173–194 (SLQE…ALLN), and 201–223 (TLKK…VEQA). Positions 234–645 (LSETQNRTSV…ISRMKEEEAQ (412 aa)) form a coiled coil.

Homomer.

Its subcellular location is the cytoplasm. The protein resides in the cytoskeleton. It localises to the microtubule organizing center. The protein localises to the centrosome. Component of the proteinaceous fiber-like linker between two centrioles, required for centrosome cohesion. The sequence is that of Leucine-rich repeat-containing protein 45 (LRRC45) from Gallus gallus (Chicken).